Reading from the N-terminus, the 113-residue chain is MARSSAVCFLLLLAFLIGTASAITCGQVDSDLTSCLGYARKGGVIPPGCCAGVRTLNNLAKTTPDRQTACNCLKSLVNPSLGLNAAIVAGIPGKCGVNIPYPIRMQTDCNKVR.

Residues 1–22 (MARSSAVCFLLLLAFLIGTASA) form the signal peptide. Cystine bridges form between cysteine 25–cysteine 72, cysteine 35–cysteine 49, cysteine 50–cysteine 95, and cysteine 70–cysteine 109.

Belongs to the plant LTP family. As to expression, highly expressed in style and stigma, abundant in young leaves and petals, and low expression in young anthers at pollen mother cell stage with an active tapetum. Not expressed in mature leaves or in pollen grains or tubes. Found in the stylar transmitting tract epidermis and in the stylar extracellular matrix.

Its function is as follows. Acts as an adhesive agent between the pollen tube wall and the stylar transmitting tract epidermis. Binds a stylar pectin in a pH-dependent manner. Enhances activity of chemocyanin, a diffusible chemotropic factor. This is Stigma/stylar cysteine-rich adhesin (SCA) from Lilium longiflorum (Trumpet lily).